The following is a 403-amino-acid chain: Casein kinase I isoform delta-A (403 aa).

Residues 9-277 (YRLGRKIGSG…YLRQLFRNLF (269 aa)) enclose the Protein kinase domain. ATP is bound by residues 15 to 23 (IGSGSFGDI) and K38. Catalysis depends on D128, which acts as the Proton acceptor. The segment at 315–340 (QGRIPLPRVMLPTSSGRPRGTQEVAP) is autoinhibitory. Residues 322 to 403 (RVMLPTSSGR…PSGLQSAVPR (82 aa)) are disordered.

The protein belongs to the protein kinase superfamily. Monomer. Interacts with per1 and per2. Component of the circadian core oscillator. Post-translationally, autophosphorylated on serine and threonine residues.

The protein localises to the cytoplasm. It is found in the nucleus. The catalysed reaction is L-seryl-[protein] + ATP = O-phospho-L-seryl-[protein] + ADP + H(+). The enzyme catalyses L-threonyl-[protein] + ATP = O-phospho-L-threonyl-[protein] + ADP + H(+). Its activity is regulated as follows. Exhibits substrate-dependent heparin activation. Its function is as follows. Casein kinases are operationally defined by their preferential utilization of acidic proteins such as caseins as substrates. Central component of the circadian clock. May act as a negative regulator of circadian rhythmicity by phosphorylating per1 and per2, which may lead to their degradation. Participates in wnt signaling. This is Casein kinase I isoform delta-A (csnk1da) from Danio rerio (Zebrafish).